A 156-amino-acid polypeptide reads, in one-letter code: Myosin, essential light chain, adductor muscle (156 aa).

EF-hand domains are found at residues 6 to 43 (DEID…LGIN) and 81 to 116 (GTFA…LGER).

Its function is as follows. In molluscan muscle, calcium regulation is associated with myosin rather than with actin. Muscle myosin contains two types of light chains: the catalytic light chain, essential for ATPase activity, and the regulatory light chain, a calcium-binding protein responsible for Ca(2+) dependent binding and Ca(2+) dependent Mg-ATPase activity. In Mizuhopecten yessoensis (Japanese scallop), this protein is Myosin, essential light chain, adductor muscle.